The primary structure comprises 36 residues: Pancreatic polypeptide (36 aa).

Tyrosine amide is present on tyrosine 36.

It belongs to the NPY family.

It is found in the secreted. Hormone secreted by pancreatic cells that acts as a regulator of pancreatic and gastrointestinal functions probably by signaling through the G protein-coupled receptor NPY4R2. The polypeptide is Pancreatic polypeptide (PPY) (Erinaceus europaeus (Western European hedgehog)).